The chain runs to 166 residues: Pyruvoyl-dependent arginine decarboxylase (166 aa).

S45 is subject to Pyruvic acid (Ser).

It belongs to the PdaD family. Pyruvate serves as cofactor.

The catalysed reaction is L-arginine + H(+) = agmatine + CO2. The chain is Pyruvoyl-dependent arginine decarboxylase from Methanocella arvoryzae (strain DSM 22066 / NBRC 105507 / MRE50).